The sequence spans 166 residues: Phosphopantetheine adenylyltransferase (166 aa).

Ser-9 lines the substrate pocket. Residues 9–10 (SF) and His-17 contribute to the ATP site. Residues Lys-41, Thr-74, and Arg-88 each coordinate substrate. Residues 89-91 (GLR), Glu-99, and 124-130 (DSFISSS) contribute to the ATP site.

The protein belongs to the bacterial CoaD family. As to quaternary structure, homohexamer. Mg(2+) is required as a cofactor.

The protein resides in the cytoplasm. The catalysed reaction is (R)-4'-phosphopantetheine + ATP + H(+) = 3'-dephospho-CoA + diphosphate. The protein operates within cofactor biosynthesis; coenzyme A biosynthesis; CoA from (R)-pantothenate: step 4/5. Functionally, reversibly transfers an adenylyl group from ATP to 4'-phosphopantetheine, yielding dephospho-CoA (dPCoA) and pyrophosphate. The protein is Phosphopantetheine adenylyltransferase of Lactobacillus johnsonii (strain CNCM I-12250 / La1 / NCC 533).